A 788-amino-acid chain; its full sequence is DNA ligase (788 aa).

Residues 35-39, 84-85, and glutamate 124 contribute to the NAD(+) site; these read DAEYD and SL. Lysine 126 functions as the N6-AMP-lysine intermediate in the catalytic mechanism. The NAD(+) site is built by arginine 147, glutamate 184, lysine 300, and lysine 324. Zn(2+) contacts are provided by cysteine 418, cysteine 421, cysteine 448, and cysteine 454. Residues 707–788 form the BRCT domain; it reads AEGLPLAGQT…FIERLAQLGS (82 aa).

This sequence belongs to the NAD-dependent DNA ligase family. LigA subfamily. Mg(2+) is required as a cofactor. Mn(2+) serves as cofactor.

It catalyses the reaction NAD(+) + (deoxyribonucleotide)n-3'-hydroxyl + 5'-phospho-(deoxyribonucleotide)m = (deoxyribonucleotide)n+m + AMP + beta-nicotinamide D-nucleotide.. Its function is as follows. DNA ligase that catalyzes the formation of phosphodiester linkages between 5'-phosphoryl and 3'-hydroxyl groups in double-stranded DNA using NAD as a coenzyme and as the energy source for the reaction. It is essential for DNA replication and repair of damaged DNA. This is DNA ligase from Stutzerimonas stutzeri (strain A1501) (Pseudomonas stutzeri).